Here is a 271-residue protein sequence, read N- to C-terminus: N-acylmannosamine 1-dehydrogenase (271 aa).

Residue 20–44 (VTGAAGGIGRATVEAYLREGASVVA) coordinates NAD(+). S153 is a binding site for substrate. Residue Y166 is the Proton acceptor of the active site.

It belongs to the short-chain dehydrogenases/reductases (SDR) family.

The catalysed reaction is an N-acyl-D-mannosamine + NAD(+) = an N-acyl-D-mannosaminolactone + NADH + H(+). Functionally, acts on acetyl-D-mannosamine and glycolyl-D-mannosamine. The sequence is that of N-acylmannosamine 1-dehydrogenase from Flavobacterium sp. (strain 141-8).